We begin with the raw amino-acid sequence, 695 residues long: Probable Rho-GTPase-activating protein 7 (695 aa).

A compositionally biased stretch (low complexity) spans 1 to 11 (MLSAPSSSTTP). Positions 1–26 (MLSAPSSSTTPASPPTSPPNTTSSDD) are disordered. Positions 33–307 (PKVEAILNSE…ALDNINANTD (275 aa)) constitute an F-BAR domain. The segment at 320-499 (EDNKNPTDAS…SVSPQPSSPT (180 aa)) is disordered. Composition is skewed to polar residues over residues 336–348 (PPSS…SAGK) and 366–382 (PLQN…NPSV). Low complexity-rich tracts occupy residues 383–432 (ASPA…RTSS), 458–467 (PIQTTTIQTS), and 488–499 (PTSVSPQPSSPT). A phosphoserine mark is found at Ser496 and Ser497. Residues 506–692 (ARLDAIILRE…ILIDYCFTIF (187 aa)) form the Rho-GAP domain.

In Schizosaccharomyces pombe (strain 972 / ATCC 24843) (Fission yeast), this protein is Probable Rho-GTPase-activating protein 7 (rga7).